The primary structure comprises 150 residues: Ribosomal RNA large subunit methyltransferase H (150 aa).

S-adenosyl-L-methionine contacts are provided by residues Leu68, Gly97, and 116–121 (LSAMTL).

This sequence belongs to the RNA methyltransferase RlmH family. Homodimer.

It localises to the cytoplasm. The enzyme catalyses pseudouridine(1915) in 23S rRNA + S-adenosyl-L-methionine = N(3)-methylpseudouridine(1915) in 23S rRNA + S-adenosyl-L-homocysteine + H(+). Its function is as follows. Specifically methylates the pseudouridine at position 1915 (m3Psi1915) in 23S rRNA. This is Ribosomal RNA large subunit methyltransferase H from Prochlorococcus marinus (strain MIT 9303).